A 470-amino-acid chain; its full sequence is Growth/differentiation factor 6 (470 aa).

The first 22 residues, Met-1–Gly-22, serve as a signal peptide directing secretion. Positions Phe-23 to Arg-350 are excised as a propeptide. Residues Ile-28–Val-98 form a disordered region. Positions Ser-45–Arg-80 are enriched in basic and acidic residues. N-linked (GlcNAc...) asparagine glycosylation is present at Asn-120. Disordered stretches follow at residues Pro-247–Phe-272 and Thr-308–Arg-366. The segment covering Gly-321 to Gly-333 has biased composition (pro residues). Over residues Gly-345–Arg-366 the composition is skewed to basic residues. 3 disulfides stabilise this stretch: Cys-369/Cys-435, Cys-398/Cys-467, and Cys-402/Cys-469.

Belongs to the TGF-beta family. In terms of assembly, homodimer; disulfide-linked.

The protein resides in the secreted. In terms of biological role, growth factor that controls proliferation and cellular differentiation in the retina and bone formation. Plays a key role in regulating apoptosis during retinal development. Establishes dorsal-ventral positional information in the retina and controls the formation of the retinotectal map. Required for normal formation of bones and joints in the limbs, skull, digits and axial skeleton. Plays a key role in establishing boundaries between skeletal elements during development. Regulation of GDF6 expression seems to be a mechanism for evolving species-specific changes in skeletal structures. Seems to positively regulate differentiation of chondrogenic tissue through the growth factor receptors subunits BMPR1A, BMPR1B, BMPR2 and ACVR2A, leading to the activation of SMAD1-SMAD5-SMAD8 complex. The regulation of chondrogenic differentiation is inhibited by NOG. Also involved in the induction of adipogenesis from mesenchymal stem cells. This mechanism acts through the growth factor receptors subunits BMPR1A, BMPR2 and ACVR2A and the activation of SMAD1-SMAD5-SMAD8 complex and MAPK14/p38. This chain is Growth/differentiation factor 6 (GDF6), found in Bos taurus (Bovine).